The following is an 84-amino-acid chain: Putative membrane protein insertion efficiency factor (84 aa).

Residues 64–84 form a disordered region; the sequence is GGSGYDPPPPRHQPRKWKCEE. A compositionally biased stretch (basic residues) spans 75–84; the sequence is HQPRKWKCEE.

It belongs to the UPF0161 family.

It localises to the cell inner membrane. Could be involved in insertion of integral membrane proteins into the membrane. This chain is Putative membrane protein insertion efficiency factor, found in Caulobacter vibrioides (strain ATCC 19089 / CIP 103742 / CB 15) (Caulobacter crescentus).